The primary structure comprises 470 residues: MNPNQKIIAIGSASLGILILNVILHVVSIIVTVLVLNNNGTGLYCNGTIIREYNETVRVERITQWYNTNTIEYIERPSNEYYMNNTEPLCEAQGFAPFSKDNGIRIGSRGHVFVIREPFVSCSPLECRTFFLTQGSLLNDKHSNGTVKDRSPYRTFMSVKVGQSPNVYQARFEAVAWSATACHDGKKWMTVGVTGPDAQAVAVVHYGGVPVDIINSWAGDILRTQESSCTCIKGDCYWVMTDGPANRQAKYRIFKAKDGRIIGQTDINFNGGHIEECSCYPNEGKVECVCRDNWTGTNRPILVISPDLSYTVGYLCAGIPTDTPRGEDSQFTGSCTSPLGNQGYGVKGFGFRQGNDVWAGRTISRTSRLGFEIIKIRNGWTQNSKDQIRKQVIVDNLNWSGYSGSFTLPVELTKKGCLVPCFWVEMIRGKPEETTIWTSSSSIVMCGVDHKIASWSWHDGAILPFDIDKM.

At 1-14 the chain is on the intravirion side; it reads MNPNQKIIAIGSAS. Residues 11-32 form an involved in apical transport and lipid raft association region; sequence GSASLGILILNVILHVVSIIVT. A helical transmembrane segment spans residues 15 to 35; that stretch reads LGILILNVILHVVSIIVTVLV. The hypervariable stalk region stretch occupies residues 32–86; it reads TVLVLNNNGTGLYCNGTIIREYNETVRVERITQWYNTNTIEYIERPSNEYYMNNT. Residues 36 to 470 lie on the Virion surface side of the membrane; the sequence is LNNNGTGLYC…AILPFDIDKM (435 aa). Residues Asn-39, Asn-46, Asn-54, and Asn-84 are each glycosylated (N-linked (GlcNAc...) asparagine; by host). Residues 89–470 are head of neuraminidase; sequence LCEAQGFAPF…AILPFDIDKM (382 aa). 8 disulfides stabilise this stretch: Cys-90–Cys-417, Cys-122–Cys-127, Cys-182–Cys-229, Cys-231–Cys-236, Cys-277–Cys-290, Cys-279–Cys-288, Cys-316–Cys-335, and Cys-421–Cys-446. Arg-116 is a binding site for substrate. Residue Asn-144 is glycosylated (N-linked (GlcNAc...) asparagine; by host). The active-site Proton donor/acceptor is the Asp-149. Arg-150 serves as a coordination point for substrate. 275-276 lines the substrate pocket; the sequence is EE. Arg-291 is a binding site for substrate. Residue Asp-292 participates in Ca(2+) binding. Asn-293 is a glycosylation site (N-linked (GlcNAc...) asparagine; by host). Ca(2+)-binding residues include Gly-296 and Asp-322. Arg-368 lines the substrate pocket. Asn-398 is a glycosylation site (N-linked (GlcNAc...) asparagine; by host). The Nucleophile role is filled by Tyr-402.

It belongs to the glycosyl hydrolase 34 family. Homotetramer. Ca(2+) serves as cofactor. N-glycosylated.

It is found in the virion membrane. The protein localises to the host apical cell membrane. It carries out the reaction Hydrolysis of alpha-(2-&gt;3)-, alpha-(2-&gt;6)-, alpha-(2-&gt;8)- glycosidic linkages of terminal sialic acid residues in oligosaccharides, glycoproteins, glycolipids, colominic acid and synthetic substrates.. Inhibited by the neuraminidase inhibitors zanamivir (Relenza) and oseltamivir (Tamiflu). These drugs interfere with the release of progeny virus from infected cells and are effective against all influenza strains. Resistance to neuraminidase inhibitors is quite rare. Functionally, catalyzes the removal of terminal sialic acid residues from viral and cellular glycoconjugates. Cleaves off the terminal sialic acids on the glycosylated HA during virus budding to facilitate virus release. Additionally helps virus spread through the circulation by further removing sialic acids from the cell surface. These cleavages prevent self-aggregation and ensure the efficient spread of the progeny virus from cell to cell. Otherwise, infection would be limited to one round of replication. Described as a receptor-destroying enzyme because it cleaves a terminal sialic acid from the cellular receptors. May facilitate viral invasion of the upper airways by cleaving the sialic acid moieties on the mucin of the airway epithelial cells. Likely to plays a role in the budding process through its association with lipid rafts during intracellular transport. May additionally display a raft-association independent effect on budding. Plays a role in the determination of host range restriction on replication and virulence. Sialidase activity in late endosome/lysosome traffic seems to enhance virus replication. This Influenza A virus (strain A/Equine/New Market/1979 H3N8) protein is Neuraminidase.